Here is a 475-residue protein sequence, read N- to C-terminus: Lipoprotein lipase (475 aa).

Residues 1-27 form the signal peptide; that stretch reads MESKALLLLALAVWLQSLTASRGGVAA. An interaction with GPIHBP1 region spans residues 32-53; it reads RDFIDIESKFALRTPEDTAEDT. Cys54 and Cys67 are oxidised to a cystine. N-linked (GlcNAc...) asparagine glycosylation occurs at Asn70. Tyr121 bears the 3'-nitrotyrosine mark. The Nucleophile role is filled by Ser159. Asp183 (charge relay system) is an active-site residue. A 3'-nitrotyrosine modification is found at Tyr191. Ala194, Arg197, Ser199, and Asp202 together coordinate Ca(2+). Cys243 and Cys266 are disulfide-bonded. An essential for determining substrate specificity region spans residues 243–266; it reads CNIGEAIRVIAERGLGDVDQLVKC. The Charge relay system role is filled by His268. Intrachain disulfides connect Cys291–Cys310 and Cys302–Cys305. The 124-residue stretch at 341–464 folds into the PLAT domain; sequence FHYQVKIHFS…KGKAPAVFVK (124 aa). Position 343 is a 3'-nitrotyrosine (Tyr343). The N-linked (GlcNAc...) asparagine glycan is linked to Asn386. The segment at 417 to 421 is important for interaction with lipoprotein particles; it reads WSDWW. The segment at 430 to 434 is important for heparin binding; that stretch reads KIRVK. The interval 443–467 is interaction with GPIHBP1; it reads IFCSREKVSHLQKGKAPAVFVKCHD. Cysteines 445 and 465 form a disulfide.

Belongs to the AB hydrolase superfamily. Lipase family. In terms of assembly, homodimer. Interacts with GPIHBP1 with 1:1 stoichiometry. Interacts with APOC2; the interaction activates LPL activity in the presence of lipids. Interaction with heparan sulfate proteoglycans is required to protect LPL against loss of activity. Associates with lipoprotein particles in blood plasma. Interacts with LMF1 and SEL1L; interaction with SEL1L is required to prevent aggregation of newly synthesized LPL in the endoplasmic reticulum (ER), and for normal export of LPL from the ER to the extracellular space. Interacts with SORL1; SORL1 acts as a sorting receptor, promoting LPL localization to endosomes and later to lysosomes, leading to degradation of newly synthesized LPL. In terms of processing, tyrosine nitration after lipopolysaccharide (LPS) challenge down-regulates the lipase activity. In terms of tissue distribution, highest levels in the spinal cord.

It localises to the cell membrane. The protein localises to the secreted. Its subcellular location is the extracellular space. It is found in the extracellular matrix. The catalysed reaction is a triacylglycerol + H2O = a diacylglycerol + a fatty acid + H(+). It catalyses the reaction a 1,2-diacyl-sn-glycero-3-phosphocholine + H2O = a 2-acyl-sn-glycero-3-phosphocholine + a fatty acid + H(+). The enzyme catalyses 1,2,3-tri-(9Z-octadecenoyl)-glycerol + H2O = di-(9Z)-octadecenoylglycerol + (9Z)-octadecenoate + H(+). It carries out the reaction 1,2-di-(9Z-octadecenoyl)-sn-glycero-3-phosphocholine + H2O = (9Z-octadecenoyl)-sn-glycero-3-phosphocholine + (9Z)-octadecenoate + H(+). The catalysed reaction is 1,2,3-tributanoylglycerol + H2O = dibutanoylglycerol + butanoate + H(+). It catalyses the reaction 1,2-dihexadecanoyl-sn-glycero-3-phosphocholine + H2O = hexadecanoyl-sn-glycero-3-phosphocholine + hexadecanoate + H(+). The apolipoprotein APOC2 acts as a coactivator of LPL activity. Ca(2+) binding promotes protein stability and formation of the active homodimer. Interaction with GPIHBP1 protects LPL against inactivation by ANGPTL4. In terms of biological role, key enzyme in triglyceride metabolism. Catalyzes the hydrolysis of triglycerides from circulating chylomicrons and very low density lipoproteins (VLDL), and thereby plays an important role in lipid clearance from the blood stream, lipid utilization and storage. Although it has both phospholipase and triglyceride lipase activities it is primarily a triglyceride lipase with low but detectable phospholipase activity. Mediates margination of triglyceride-rich lipoprotein particles in capillaries. Recruited to its site of action on the luminal surface of vascular endothelium by binding to GPIHBP1 and cell surface heparan sulfate proteoglycans. The protein is Lipoprotein lipase (LPL) of Papio anubis (Olive baboon).